The following is a 305-amino-acid chain: Putative ankyrin repeat protein RF_0580 (305 aa).

ANK repeat units lie at residues Tyr-5–Glu-34, Arg-39–Ile-68, Ser-72–Leu-101, Cys-107–Ser-136, Phe-140–Ala-169, Tyr-173–Ile-202, and Asn-206–Ile-235.

This Rickettsia felis (strain ATCC VR-1525 / URRWXCal2) (Rickettsia azadi) protein is Putative ankyrin repeat protein RF_0580.